The following is a 289-amino-acid chain: Golgi to ER traffic protein 2 (289 aa).

Residues 1 to 10 (MSEVSEAEKR) show a composition bias toward basic and acidic residues. Positions 1 to 68 (MSEVSEAEKR…LQRGSNSGQS (68 aa)) are disordered. Residues 1–153 (MSEVSEAEKR…VGVHQFQVRQ (153 aa)) lie on the Cytoplasmic side of the membrane. The segment covering 11-21 (RILREKRKQKF) has biased composition (basic residues). A compositionally biased stretch (polar residues) spans 33–68 (ITTQQPGGASGDSTVTSAEISDNEGSLQRGSNSGQS). A helical transmembrane segment spans residues 154 to 173 (LKAYMLLLRWAILLPFIYYV). Residues 174-196 (MHPGTAHWLHTSRFLHFVMEPRN) lie on the Lumenal side of the membrane. A helical transmembrane segment spans residues 197-216 (FFMVFTTFEVASISIYYQVL). Residues 217-263 (LTLERTNKVNSLSYSSKLVTWAGLVPDGMLPIDNLQGKVVVALHYWD) are Cytoplasmic-facing. The chain crosses the membrane as a helical span at residues 264–284 (ILSMYLTDLSLCLVAAGLMKY). The Lumenal segment spans residues 285–289 (YHAAP).

This sequence belongs to the GET2 family. As to quaternary structure, component of the Golgi to ER traffic (GET) complex, which is composed of GET1, GET2 and GET3. Within the complex, GET1 and GET2 form a heterotetramer which is stabilized by phosphatidylinositol binding and which binds to the GET3 homodimer.

The protein localises to the endoplasmic reticulum membrane. It localises to the golgi apparatus membrane. Required for the post-translational delivery of tail-anchored (TA) proteins to the endoplasmic reticulum. Together with GET1, acts as a membrane receptor for soluble GET3, which recognizes and selectively binds the transmembrane domain of TA proteins in the cytosol. The GET complex cooperates with the HDEL receptor ERD2 to mediate the ATP-dependent retrieval of resident ER proteins that contain a C-terminal H-D-E-L retention signal from the Golgi to the ER. The polypeptide is Golgi to ER traffic protein 2 (Eremothecium gossypii (strain ATCC 10895 / CBS 109.51 / FGSC 9923 / NRRL Y-1056) (Yeast)).